We begin with the raw amino-acid sequence, 594 residues long: Trehalase (594 aa).

A signal peptide spans 1 to 27; that stretch reads MDFLNKKIQKILFICILSFLIVNLTKS. Residues Asn56, Asn70, Asn97, and Asn166 are each glycosylated (N-linked (GlcNAc...) asparagine). Substrate-binding positions include Arg190, 197-198, and Asn234; that span reads WD. Asn242 is a glycosylation site (N-linked (GlcNAc...) asparagine). Position 243–245 (243–245) interacts with substrate; it reads RSQ. 2 N-linked (GlcNAc...) asparagine glycosylation sites follow: Asn261 and Asn305. Residues 312 to 314 and Gly346 each bind substrate; that span reads RPE. Residue Asp348 is the Proton donor/acceptor of the active site. N-linked (GlcNAc...) asparagine glycans are attached at residues Asn361, Asn395, Asn513, and Asn537. Glu549 acts as the Proton donor/acceptor in catalysis. Position 564 (Glu564) interacts with substrate.

This sequence belongs to the glycosyl hydrolase 37 family.

It carries out the reaction alpha,alpha-trehalose + H2O = alpha-D-glucose + beta-D-glucose. The protein is Trehalase (treh) of Dictyostelium discoideum (Social amoeba).